Reading from the N-terminus, the 338-residue chain is UDP-N-acetylenolpyruvoylglucosamine reductase (338 aa).

The FAD-binding PCMH-type domain maps to Ile17–Arg188. Arg164 is a catalytic residue. Ser237 functions as the Proton donor in the catalytic mechanism. Glu333 is a catalytic residue.

This sequence belongs to the MurB family. The cofactor is FAD.

The protein localises to the cytoplasm. It carries out the reaction UDP-N-acetyl-alpha-D-muramate + NADP(+) = UDP-N-acetyl-3-O-(1-carboxyvinyl)-alpha-D-glucosamine + NADPH + H(+). Its pathway is cell wall biogenesis; peptidoglycan biosynthesis. Functionally, cell wall formation. This chain is UDP-N-acetylenolpyruvoylglucosamine reductase, found in Porphyromonas gingivalis (strain ATCC 33277 / DSM 20709 / CIP 103683 / JCM 12257 / NCTC 11834 / 2561).